The primary structure comprises 188 residues: Cytochrome c oxidase assembly protein CtaG (188 aa).

Topologically, residues 1-8 (MSKKSNKN) are cytoplasmic. Residues 9–31 (LAFSLLGLIISMVLLSFASVPIY) traverse the membrane as a helical; Signal-anchor for type II membrane protein segment. Residues 32–188 (NLFCKVTGYG…SSLRGNYVSN (157 aa)) are Periplasmic-facing.

It belongs to the COX11/CtaG family.

It is found in the cell inner membrane. In terms of biological role, exerts its effect at some terminal stage of cytochrome c oxidase synthesis, probably by being involved in the insertion of the copper B into subunit I. The protein is Cytochrome c oxidase assembly protein CtaG of Rickettsia conorii (strain ATCC VR-613 / Malish 7).